We begin with the raw amino-acid sequence, 159 residues long: Phosphopantetheine adenylyltransferase (159 aa).

Thr-10 contributes to the substrate binding site. ATP is bound by residues 10–11 (TF) and His-18. The substrate site is built by Lys-42, Met-74, and Arg-88. Residues 89–91 (GLR), Glu-99, and 124–130 (WSFISSS) contribute to the ATP site.

Belongs to the bacterial CoaD family. In terms of assembly, homohexamer. It depends on Mg(2+) as a cofactor.

It is found in the cytoplasm. It carries out the reaction (R)-4'-phosphopantetheine + ATP + H(+) = 3'-dephospho-CoA + diphosphate. The protein operates within cofactor biosynthesis; coenzyme A biosynthesis; CoA from (R)-pantothenate: step 4/5. In terms of biological role, reversibly transfers an adenylyl group from ATP to 4'-phosphopantetheine, yielding dephospho-CoA (dPCoA) and pyrophosphate. The polypeptide is Phosphopantetheine adenylyltransferase (Salmonella typhimurium (strain LT2 / SGSC1412 / ATCC 700720)).